We begin with the raw amino-acid sequence, 211 residues long: Ribosomal RNA small subunit methyltransferase G (211 aa).

Residues Gly-76, Leu-81, 127–128 (VE), and Arg-142 each bind S-adenosyl-L-methionine.

Belongs to the methyltransferase superfamily. RNA methyltransferase RsmG family.

The protein localises to the cytoplasm. The enzyme catalyses guanosine(527) in 16S rRNA + S-adenosyl-L-methionine = N(7)-methylguanosine(527) in 16S rRNA + S-adenosyl-L-homocysteine. In terms of biological role, specifically methylates the N7 position of guanine in position 527 of 16S rRNA. In Vibrio campbellii (strain ATCC BAA-1116), this protein is Ribosomal RNA small subunit methyltransferase G.